We begin with the raw amino-acid sequence, 238 residues long: Ribonuclease PH (238 aa).

Phosphate contacts are provided by residues R86 and 124–126 (GTR).

The protein belongs to the RNase PH family. As to quaternary structure, homohexameric ring arranged as a trimer of dimers.

The catalysed reaction is tRNA(n+1) + phosphate = tRNA(n) + a ribonucleoside 5'-diphosphate. Phosphorolytic 3'-5' exoribonuclease that plays an important role in tRNA 3'-end maturation. Removes nucleotide residues following the 3'-CCA terminus of tRNAs; can also add nucleotides to the ends of RNA molecules by using nucleoside diphosphates as substrates, but this may not be physiologically important. Probably plays a role in initiation of 16S rRNA degradation (leading to ribosome degradation) during starvation. This is Ribonuclease PH from Acinetobacter baylyi (strain ATCC 33305 / BD413 / ADP1).